The primary structure comprises 212 residues: uncharacterized protein (212 aa).

Belongs to the IIV-6 309L family.

This is an uncharacterized protein from Aedes vexans (Inland floodwater mosquito).